The sequence spans 215 residues: Vesicle-trafficking protein SEC22b (215 aa).

At 1–190 (MVLLTMIARV…RQDAKYLNMR (190 aa)) the chain is on the cytoplasmic side. A Longin domain is found at 6 to 119 (MIARVADGLP…YSFIEFDNYI (114 aa)). One can recognise a v-SNARE coiled-coil homology domain in the interval 134 to 194 (NLSSVNTELQ…KYLNMRSTYA (61 aa)). Residues 191-213 (STYAKLAAVAVFSVMLIVYIRFW) traverse the membrane as a helical segment. The Lumenal portion of the chain corresponds to 214-215 (WL).

Belongs to the synaptobrevin family. Component of 2 distinct SNARE complexes.

The protein localises to the endoplasmic reticulum membrane. The protein resides in the endoplasmic reticulum-Golgi intermediate compartment membrane. It localises to the golgi apparatus. Its subcellular location is the cis-Golgi network membrane. It is found in the trans-Golgi network membrane. The protein localises to the melanosome. SNARE involved in targeting and fusion of ER-derived transport vesicles with the Golgi complex as well as Golgi-derived retrograde transport vesicles with the ER. This Xenopus tropicalis (Western clawed frog) protein is Vesicle-trafficking protein SEC22b.